Reading from the N-terminus, the 285-residue chain is Prephenate dehydratase (285 aa).

One can recognise a Prephenate dehydratase domain in the interval 2-183 (KVGYLGPAAT…NHTRFVILSP (182 aa)). Residues 204–281 (MVMLPQDDQS…CKVRLLGAYQ (78 aa)) form the ACT domain.

It carries out the reaction prephenate + H(+) = 3-phenylpyruvate + CO2 + H2O. It participates in amino-acid biosynthesis; L-phenylalanine biosynthesis; phenylpyruvate from prephenate: step 1/1. This chain is Prephenate dehydratase (pheA), found in Bacillus subtilis (strain 168).